The chain runs to 97 residues: Coiled-coil domain-containing protein 167 (97 aa).

Residues 2–78 (TKKKRENLGV…LLRHENRKNT (77 aa)) are a coiled coil. A helical membrane pass occupies residues 78 to 95 (TLLSVAIFTVFALLYAYW).

Its subcellular location is the membrane. The protein is Coiled-coil domain-containing protein 167 (Ccdc167) of Mus musculus (Mouse).